We begin with the raw amino-acid sequence, 522 residues long: Light-independent protochlorophyllide reductase subunit B (522 aa).

Residue aspartate 36 participates in [4Fe-4S] cluster binding. Aspartate 290 acts as the Proton donor in catalysis. Residue 425–426 (GL) coordinates substrate.

Belongs to the ChlB/BchB/BchZ family. In terms of assembly, protochlorophyllide reductase is composed of three subunits; ChlL, ChlN and ChlB. Forms a heterotetramer of two ChlB and two ChlN subunits. The cofactor is [4Fe-4S] cluster.

The catalysed reaction is chlorophyllide a + oxidized 2[4Fe-4S]-[ferredoxin] + 2 ADP + 2 phosphate = protochlorophyllide a + reduced 2[4Fe-4S]-[ferredoxin] + 2 ATP + 2 H2O. It functions in the pathway porphyrin-containing compound metabolism; chlorophyll biosynthesis (light-independent). Component of the dark-operative protochlorophyllide reductase (DPOR) that uses Mg-ATP and reduced ferredoxin to reduce ring D of protochlorophyllide (Pchlide) to form chlorophyllide a (Chlide). This reaction is light-independent. The NB-protein (ChlN-ChlB) is the catalytic component of the complex. This chain is Light-independent protochlorophyllide reductase subunit B, found in Synechococcus sp. (strain CC9311).